Reading from the N-terminus, the 781-residue chain is Dynamin-related protein dnm1 (781 aa).

A Dynamin-type G domain is found at 23-328; the sequence is FLDLPSIVVV…LVSHIRERLP (306 aa). The segment at 33–40 is G1 motif; it reads GSQSCGKS. 33-40 is a binding site for GTP; it reads GSQSCGKS. Positions 59–61 are G2 motif; that stretch reads VTR. The segment at 76-103 is disordered; that stretch reads KNNHDEESTSDNNSEETSAAGETGSLEG. The tract at residues 170-173 is G3 motif; it reads DLPG. Residues 170 to 174 and 239 to 242 contribute to the GTP site; these read DLPGL and TKLD. The interval 239–242 is G4 motif; the sequence is TKLD. The tract at residues 269 to 272 is G5 motif; it reads VNRS. The GED domain occupies 694 to 781; that stretch reads VDLIKELITS…QANKIISTVF (88 aa).

It belongs to the TRAFAC class dynamin-like GTPase superfamily. Dynamin/Fzo/YdjA family.

Its subcellular location is the cytoplasm. The protein localises to the mitochondrion outer membrane. The enzyme catalyses GTP + H2O = GDP + phosphate + H(+). In terms of biological role, microtubule-associated force-producing protein that mediates mitochondrial fission during interphasic growth and at cell division. Fission of mitochondria occurs in many cell types and constitutes an important step in mitochondria morphology, which is balanced between fusion and fission. With vps1, acts redundantly in peroxisome biogenesis, which is under cell cycle control. The polypeptide is Dynamin-related protein dnm1 (dnm1) (Schizosaccharomyces pombe (strain 972 / ATCC 24843) (Fission yeast)).